The chain runs to 250 residues: Phosphoribosylaminoimidazole-succinocarboxamide synthase (250 aa).

This sequence belongs to the SAICAR synthetase family.

The catalysed reaction is 5-amino-1-(5-phospho-D-ribosyl)imidazole-4-carboxylate + L-aspartate + ATP = (2S)-2-[5-amino-1-(5-phospho-beta-D-ribosyl)imidazole-4-carboxamido]succinate + ADP + phosphate + 2 H(+). It functions in the pathway purine metabolism; IMP biosynthesis via de novo pathway; 5-amino-1-(5-phospho-D-ribosyl)imidazole-4-carboxamide from 5-amino-1-(5-phospho-D-ribosyl)imidazole-4-carboxylate: step 1/2. The protein is Phosphoribosylaminoimidazole-succinocarboxamide synthase of Synechococcus sp. (strain CC9605).